A 1060-amino-acid chain; its full sequence is DNA-directed RNA polymerase subunit beta (1060 aa).

Belongs to the RNA polymerase beta chain family. In plastids the minimal PEP RNA polymerase catalytic core is composed of four subunits: alpha, beta, beta', and beta''. When a (nuclear-encoded) sigma factor is associated with the core the holoenzyme is formed, which can initiate transcription.

The protein resides in the plastid. It is found in the chloroplast. The catalysed reaction is RNA(n) + a ribonucleoside 5'-triphosphate = RNA(n+1) + diphosphate. DNA-dependent RNA polymerase catalyzes the transcription of DNA into RNA using the four ribonucleoside triphosphates as substrates. In Calycanthus floridus var. glaucus (Eastern sweetshrub), this protein is DNA-directed RNA polymerase subunit beta.